Reading from the N-terminus, the 740-residue chain is N-acetylated-alpha-linked acidic dipeptidase 2 (740 aa).

The Cytoplasmic portion of the chain corresponds to 1 to 7 (MARPRHL). The chain crosses the membrane as a helical; Signal-anchor for type II membrane protein span at residues 8-31 (RGLGMCITAVLASFIAGFTVGWFI). The Extracellular segment spans residues 32–740 (KPLKETTTSA…AAAGTLTNVL (709 aa)). N-linked (GlcNAc...) asparagine glycosylation is found at asparagine 111, asparagine 143, and asparagine 185. The substrate site is built by arginine 200 and asparagine 247. Residues threonine 259 and tyrosine 262 each coordinate Ca(2+). The tract at residues 264–577 (AKEYTFRLPV…QLRGALVYEL (314 aa)) is NAALADase. An N-linked (GlcNAc...) asparagine glycan is attached at asparagine 314. Zn(2+) is bound by residues histidine 367 and aspartate 377. Glutamate 414 contributes to the substrate binding site. Catalysis depends on glutamate 414, which acts as the Nucleophile; for NAALADase activity. Glutamate 415 is a binding site for Zn(2+). Glutamate 423 and glutamate 426 together coordinate Ca(2+). A Zn(2+)-binding site is contributed by aspartate 443. Asparagine 449 is a glycosylation site (N-linked (GlcNAc...) asparagine). Substrate contacts are provided by residues 507–508 (SG), 524–526 (RAR), tyrosine 542, and 542–543 (YH). Position 543 (histidine 543) interacts with Zn(2+). The N-linked (GlcNAc...) asparagine glycan is linked to asparagine 603. Residue serine 618 is the Charge relay system of the active site. Asparagine 628 is a glycosylation site (N-linked (GlcNAc...) asparagine). Active-site charge relay system residues include aspartate 656 and histidine 679. Position 689–690 (689–690 (KY)) interacts with substrate.

The protein belongs to the peptidase M28 family. M28B subfamily. Homodimer. Requires Zn(2+) as cofactor. In terms of tissue distribution, expressed ovary, testes and lung, but not brain.

The protein resides in the cell membrane. The enzyme catalyses Release of an unsubstituted, C-terminal glutamyl residue, typically from Ac-Asp-Glu or folylpoly-gamma-glutamates.. Functionally, has N-acetylated-alpha-linked-acidic dipeptidase (NAALADase) activity. Also exhibits a dipeptidyl-peptidase IV type activity. Inactivates the peptide neurotransmitter N-acetylaspartylglutamate. The polypeptide is N-acetylated-alpha-linked acidic dipeptidase 2 (Naalad2) (Mus musculus (Mouse)).